Reading from the N-terminus, the 90-residue chain is Small ribosomal subunit protein uS19 (90 aa).

The protein belongs to the universal ribosomal protein uS19 family.

Protein S19 forms a complex with S13 that binds strongly to the 16S ribosomal RNA. The protein is Small ribosomal subunit protein uS19 of Thioalkalivibrio sulfidiphilus (strain HL-EbGR7).